The following is a 253-amino-acid chain: MLEQSESHAFINNAPKEDRIQVKFEQLFESLPLPLRAEEALSKLRHDSARLMILKTSDPTLNMSTYSIEDSPMGFECLKYNLSDNNKLLSQNNYRLPDYLEEDEIVSYTFSKTGPTTSKNKHPSHSNTIRSPPYKVKKESCHTEINNVSNVSTESINVIDASRGYSPYTSVDSLSVSKNRSFISLEESASNQYDAAEAFYFNADSSSPLRKLSPIELPVTPIRRKTPTINPNSELKRLQTFGKLILHKGSRRR.

The tract at residues 113–136 (TGPTTSKNKHPSHSNTIRSPPYKV) is disordered.

In terms of assembly, component of the CENP-A recruiting complex composed of at least mis16, mis19, mis19 and mis20.

The protein localises to the cytoplasm. It localises to the cytoskeleton. It is found in the microtubule organizing center. The protein resides in the spindle pole body. Its subcellular location is the chromosome. The protein localises to the centromere. In terms of biological role, component of the CENP-A recruiting complex that ensures the integrity of mitotic spindles through maintenance of kinetochore factors mis6/CENP-I and cnp1/CENP-A. Seems dispensable for proper chromosome segregation. This Schizosaccharomyces pombe (strain 972 / ATCC 24843) (Fission yeast) protein is CENP-A recruiting complex protein mis20.